A 157-amino-acid polypeptide reads, in one-letter code: Ribonuclease H (157 aa).

In terms of domain architecture, RNase H type-1 spans 4–146 (KRTEITIYTD…CDKLAVKASQ (143 aa)). Mg(2+) contacts are provided by Asp-13, Glu-51, Asp-73, and Asp-138.

This sequence belongs to the RNase H family. As to quaternary structure, monomer. Mg(2+) serves as cofactor.

The protein localises to the cytoplasm. The catalysed reaction is Endonucleolytic cleavage to 5'-phosphomonoester.. Endonuclease that specifically degrades the RNA of RNA-DNA hybrids. This is Ribonuclease H from Trichodesmium erythraeum (strain IMS101).